A 317-amino-acid polypeptide reads, in one-letter code: Transaldolase (317 aa).

Residue Lys126 is the Schiff-base intermediate with substrate of the active site.

It belongs to the transaldolase family. Type 1 subfamily. As to quaternary structure, homodimer.

Its subcellular location is the cytoplasm. It catalyses the reaction D-sedoheptulose 7-phosphate + D-glyceraldehyde 3-phosphate = D-erythrose 4-phosphate + beta-D-fructose 6-phosphate. The protein operates within carbohydrate degradation; pentose phosphate pathway; D-glyceraldehyde 3-phosphate and beta-D-fructose 6-phosphate from D-ribose 5-phosphate and D-xylulose 5-phosphate (non-oxidative stage): step 2/3. Its function is as follows. Transaldolase is important for the balance of metabolites in the pentose-phosphate pathway. The polypeptide is Transaldolase (Paraburkholderia xenovorans (strain LB400)).